We begin with the raw amino-acid sequence, 367 residues long: Glutamate 5-kinase (367 aa).

Position 17 (K17) interacts with ATP. Substrate is bound by residues S57, D144, and N156. ATP contacts are provided by residues 176–177 (SD) and 217–223 (TGGMTSK). In terms of domain architecture, PUA spans 279–357 (AGALTLDEGA…SELPGELRRP (79 aa)).

This sequence belongs to the glutamate 5-kinase family.

Its subcellular location is the cytoplasm. The catalysed reaction is L-glutamate + ATP = L-glutamyl 5-phosphate + ADP. It participates in amino-acid biosynthesis; L-proline biosynthesis; L-glutamate 5-semialdehyde from L-glutamate: step 1/2. Catalyzes the transfer of a phosphate group to glutamate to form L-glutamate 5-phosphate. The protein is Glutamate 5-kinase of Mycobacterium avium (strain 104).